A 184-amino-acid polypeptide reads, in one-letter code: Putative manganese efflux pump MntP (184 aa).

6 consecutive transmembrane segments (helical) span residues 12-32 (SIMAFALGMDAFSVGLGMGMI), 39-59 (IIYIGLVIGIFHMFMPLFGML), 63-83 (LLSGWLGLLATYIGGALLLVL), 99-119 (FIAPVGAGLVLFATSVSLDSF), 132-152 (VWMTILLFGFFSMILTWLGLL), and 164-184 (YSGALGGIILLAFGIKLLFPL).

The protein belongs to the MntP (TC 9.B.29) family.

Its subcellular location is the cell membrane. Its function is as follows. Probably functions as a manganese efflux pump. The protein is Putative manganese efflux pump MntP of Bacillus pumilus (strain SAFR-032).